Here is a 294-residue protein sequence, read N- to C-terminus: 1D-myo-inositol 2-acetamido-2-deoxy-alpha-D-glucopyranoside deacetylase (294 aa).

Zn(2+) is bound by residues H15, D18, and H150.

It belongs to the MshB deacetylase family. It depends on Zn(2+) as a cofactor.

It carries out the reaction 1D-myo-inositol 2-acetamido-2-deoxy-alpha-D-glucopyranoside + H2O = 1D-myo-inositol 2-amino-2-deoxy-alpha-D-glucopyranoside + acetate. In terms of biological role, catalyzes the deacetylation of 1D-myo-inositol 2-acetamido-2-deoxy-alpha-D-glucopyranoside (GlcNAc-Ins) in the mycothiol biosynthesis pathway. This is 1D-myo-inositol 2-acetamido-2-deoxy-alpha-D-glucopyranoside deacetylase from Streptomyces avermitilis (strain ATCC 31267 / DSM 46492 / JCM 5070 / NBRC 14893 / NCIMB 12804 / NRRL 8165 / MA-4680).